The sequence spans 382 residues: Transforming growth factor beta-1 proprotein (382 aa).

The signal sequence occupies residues 1–21; sequence MEVLWMLLVLLVLHLSSLAMS. A straightjacket domain region spans residues 22–65; that stretch reads LSTCKAVDMEEVRKRRIEAIRGQILSKLKLDKTPDVDSEKMTVP. The interval 66 to 263 is arm domain; that stretch reads SEAIFLYNST…SMPAERIDTV (198 aa). 3 N-linked (GlcNAc...) asparagine glycosylation sites follow: Asn73, Asn123, and Asn166. The segment at 218–242 is bowtie tail; the sequence is PTPQAKDIDIEGFPALRGDLASLSS. The Cell attachment site signature appears at 234–236; that stretch reads RGD. Intrachain disulfides connect Cys277/Cys286, Cys285/Cys348, Cys314/Cys379, and Cys318/Cys381.

It belongs to the TGF-beta family. Latency-associated peptide: Homodimer; disulfide-linked. Latency-associated peptide: Interacts with Transforming growth factor beta-1 (TGF-beta-1) chain; interaction is non-covalent and maintains (TGF-beta-1) in a latent state; each Latency-associated peptide (LAP) monomer interacts with TGF-beta-1 in the other monomer. Transforming growth factor beta-1: Homodimer; disulfide-linked. Transforming growth factor beta-1: Interacts with TGF-beta receptors (tgfbr1 and tgfbr2), leading to signal transduction. Transforming growth factor beta-1 proprotein: The precursor proprotein is cleaved in the Golgi apparatus to form Transforming growth factor beta-1 (TGF-beta-1) and Latency-associated peptide (LAP) chains, which remain non-covalently linked, rendering TGF-beta-1 inactive.

The protein resides in the secreted. It localises to the extracellular space. Its subcellular location is the extracellular matrix. In terms of biological role, transforming growth factor beta-1 proprotein: Precursor of the Latency-associated peptide (LAP) and Transforming growth factor beta-1 (TGF-beta-1) chains, which constitute the regulatory and active subunit of TGF-beta-1, respectively. Functionally, required to maintain the Transforming growth factor beta-1 (TGF-beta-1) chain in a latent state during storage in extracellular matrix. Associates non-covalently with TGF-beta-1 and regulates its activation via interaction with 'milieu molecules', such as LTBP1, LRRC32/GARP and LRRC33/NRROS, that control activation of TGF-beta-1. Interaction with integrins (ITGAV:ITGB6 or ITGAV:ITGB8) results in distortion of the Latency-associated peptide chain and subsequent release of the active TGF-beta-1. Its function is as follows. Transforming growth factor beta-1: Multifunctional protein that regulates the growth and differentiation of various cell types and is involved in various processes, such as normal development, immune function, microglia function and responses to neurodegeneration. Activation into mature form follows different steps: following cleavage of the proprotein in the Golgi apparatus, Latency-associated peptide (LAP) and Transforming growth factor beta-1 (TGF-beta-1) chains remain non-covalently linked rendering TGF-beta-1 inactive during storage in extracellular matrix. At the same time, LAP chain interacts with 'milieu molecules', such as ltbp1, lrrc32/garp and lrrc33/nrros that control activation of TGF-beta-1 and maintain it in a latent state during storage in extracellular milieus. TGF-beta-1 is released from LAP by integrins (ITGAV:ITGB6 or ITGAV:ITGB8): integrin-binding to LAP stabilizes an alternative conformation of the LAP bowtie tail and results in distortion of the LAP chain and subsequent release of the active TGF-beta-1. Once activated following release of LAP, TGF-beta-1 acts by binding to TGF-beta receptors (tgfbr1 and tgfbr2), which transduce signal. While expressed by many cells types, TGF-beta-1 only has a very localized range of action within cell environment thanks to fine regulation of its activation by Latency-associated peptide chain (LAP) and 'milieu molecules'. Plays an important role in bone remodeling: acts as a potent stimulator of osteoblastic bone formation. Can promote either T-helper 17 cells (Th17) or regulatory T-cells (Treg) lineage differentiation in a concentration-dependent manner. Can induce epithelial-to-mesenchymal transition (EMT) and cell migration in various cell types. The sequence is that of Transforming growth factor beta-1 proprotein (tgfb1) from Xenopus laevis (African clawed frog).